A 295-amino-acid polypeptide reads, in one-letter code: ER-localized J domain-containing protein 5 (295 aa).

Positions 1–20 are cleaved as a signal peptide; sequence MNGYWKPALVVLGLVSLSYA. Residues 21–130 lie on the Lumenal side of the membrane; sequence FTTIETEIFQ…GFYFSRMKPK (110 aa). One can recognise a J domain in the interval 42–110; the sequence is DMNFYKFLKL…RKIYDYYLQN (69 aa). A helical membrane pass occupies residues 131-151; sequence TWFLLAFIWIVVNIGQYIISI. Over 152–295 the chain is Cytoplasmic; it reads IQYRSQRSRI…PNGKVIYSRK (144 aa). Residues 259 to 287 are disordered; sequence KYDGNQTKKGNKVKKGSAKKGQKKMELPN. The span at 267–280 shows a compositional bias: basic residues; the sequence is KGNKVKKGSAKKGQ.

This sequence belongs to the DnaJ family.

It localises to the endoplasmic reticulum membrane. Its function is as follows. DnaJ-like chaperone required for the folding capacity of the endoplasmic reticulum. This Saccharomyces cerevisiae (strain ATCC 204508 / S288c) (Baker's yeast) protein is ER-localized J domain-containing protein 5 (ERJ5).